Here is an 882-residue protein sequence, read N- to C-terminus: Probable LRR receptor-like serine/threonine-protein kinase At1g12460 (882 aa).

A signal peptide spans 1–21; the sequence is MRKVHLFLVLVHFIYISTSRS. At 22 to 515 the chain is on the extracellular side; it reads DSISERDILL…SRNSDALSIS (494 aa). Residue Asn76 is glycosylated (N-linked (GlcNAc...) asparagine). 16 LRR repeats span residues 92–113, 116–138, 140–162, 165–187, 189–210, 213–235, 237–258, 261–283, 285–308, 309–331, 333–355, 357–379, 381–404, 405–427, 429–451, and 453–475; these read FIRV…DYFK, TLWT…ISEL, SLRF…LFKF, KTKF…IVNC, NLVG…RICD, VLEY…IQKC, RLIL…AVLT, NITY…VDCS, SLEF…MGCK, SLKL…IGKM, SLSV…IGSL, FLQV…ISNC, VLLE…LNLT, NIKI…LGNL, KVQF…LGSL, and TLTH…PMIQ. Residue Asn121 is glycosylated (N-linked (GlcNAc...) asparagine). Residues Asn261 and Asn266 are each glycosylated (N-linked (GlcNAc...) asparagine). N-linked (GlcNAc...) asparagine glycans are attached at residues Asn321 and Asn341. Residues Asn402, Asn417, and Asn426 are each glycosylated (N-linked (GlcNAc...) asparagine). N-linked (GlcNAc...) asparagine glycosylation is found at Asn458 and Asn463. Residues 516 to 536 traverse the membrane as a helical segment; sequence VIIVIIAAAVILFGVCIVLAL. At 537-882 the chain is on the cytoplasmic side; it reads NLRARKRRKD…LESIRNGFGS (346 aa). At Thr589 the chain carries Phosphothreonine. A Protein kinase domain is found at 593–876; the sequence is LDKENIIGMG…AEVVQVLESI (284 aa). Residues 599-607 and Lys621 contribute to the ATP site; that span reads IGMGSIGSV. Tyr770 carries the phosphotyrosine modification.

Belongs to the protein kinase superfamily. Ser/Thr protein kinase family.

The protein resides in the cell membrane. The enzyme catalyses L-seryl-[protein] + ATP = O-phospho-L-seryl-[protein] + ADP + H(+). It carries out the reaction L-threonyl-[protein] + ATP = O-phospho-L-threonyl-[protein] + ADP + H(+). The sequence is that of Probable LRR receptor-like serine/threonine-protein kinase At1g12460 from Arabidopsis thaliana (Mouse-ear cress).